The following is a 192-amino-acid chain: uncharacterized protein (192 aa).

This sequence to M.thermoautotrophicum MTH863.

This is an uncharacterized protein from Methanocaldococcus jannaschii (strain ATCC 43067 / DSM 2661 / JAL-1 / JCM 10045 / NBRC 100440) (Methanococcus jannaschii).